A 313-amino-acid polypeptide reads, in one-letter code: MRIVFVGTPEFAAEILEHLIKNGFNVVGVVTQPDKPRGRGRKVAPTPVKAVAEKHEVPFIQPESINKKEALEFLRSVRPDVIIVASYGKILGEKVLSLPRLGCYNIHPSLLPKYRGASPIQRVLENGEERTGVTIYKMVKELDAGPIALQKEISVDPFETFDQLEKRLIELSKEMLIEFLEKLKTGNIELKEQDHSRATYAPMIKKEDLIVDFSKDAESVKNKIRAYDSRPGARAFLGNVEVKLFGVTAIDSSGDEPGLINYIDREGAWIGTGDGKVKVRYIQFPGKKKMTFWEAKNGRLIIEGMRFERRYES.

109 to 112 (SLLP) contributes to the (6S)-5,6,7,8-tetrahydrofolate binding site.

Belongs to the Fmt family.

The enzyme catalyses L-methionyl-tRNA(fMet) + (6R)-10-formyltetrahydrofolate = N-formyl-L-methionyl-tRNA(fMet) + (6S)-5,6,7,8-tetrahydrofolate + H(+). Its function is as follows. Attaches a formyl group to the free amino group of methionyl-tRNA(fMet). The formyl group appears to play a dual role in the initiator identity of N-formylmethionyl-tRNA by promoting its recognition by IF2 and preventing the misappropriation of this tRNA by the elongation apparatus. This Thermotoga maritima (strain ATCC 43589 / DSM 3109 / JCM 10099 / NBRC 100826 / MSB8) protein is Methionyl-tRNA formyltransferase.